Here is a 503-residue protein sequence, read N- to C-terminus: Maturase K (503 aa).

This sequence belongs to the intron maturase 2 family. MatK subfamily.

It is found in the plastid. Its subcellular location is the chloroplast. Functionally, usually encoded in the trnK tRNA gene intron. Probably assists in splicing its own and other chloroplast group II introns. This is Maturase K from Rosa rugosa (Rugosa rose).